Consider the following 398-residue polypeptide: Dual-specificity RNA methyltransferase RlmN (398 aa).

Glu-121 serves as the catalytic Proton acceptor. The 244-residue stretch at 127–370 (ETDRGTLCVS…VRTPRGRDIL (244 aa)) folds into the Radical SAM core domain. A disulfide bridge links Cys-134 with Cys-373. Positions 141, 145, and 148 each coordinate [4Fe-4S] cluster. S-adenosyl-L-methionine is bound by residues 199–200 (GE), Ser-231, 253–255 (SLH), and Asn-330. The S-methylcysteine intermediate role is filled by Cys-373.

This sequence belongs to the radical SAM superfamily. RlmN family. It depends on [4Fe-4S] cluster as a cofactor.

The protein localises to the cytoplasm. It carries out the reaction adenosine(2503) in 23S rRNA + 2 reduced [2Fe-2S]-[ferredoxin] + 2 S-adenosyl-L-methionine = 2-methyladenosine(2503) in 23S rRNA + 5'-deoxyadenosine + L-methionine + 2 oxidized [2Fe-2S]-[ferredoxin] + S-adenosyl-L-homocysteine. The catalysed reaction is adenosine(37) in tRNA + 2 reduced [2Fe-2S]-[ferredoxin] + 2 S-adenosyl-L-methionine = 2-methyladenosine(37) in tRNA + 5'-deoxyadenosine + L-methionine + 2 oxidized [2Fe-2S]-[ferredoxin] + S-adenosyl-L-homocysteine. Functionally, specifically methylates position 2 of adenine 2503 in 23S rRNA and position 2 of adenine 37 in tRNAs. m2A2503 modification seems to play a crucial role in the proofreading step occurring at the peptidyl transferase center and thus would serve to optimize ribosomal fidelity. This Rhodopseudomonas palustris (strain BisB5) protein is Dual-specificity RNA methyltransferase RlmN.